The chain runs to 418 residues: Putative competence-damage inducible protein (418 aa).

It belongs to the CinA family.

The polypeptide is Putative competence-damage inducible protein (Clostridioides difficile (strain 630) (Peptoclostridium difficile)).